A 339-amino-acid chain; its full sequence is Protein FAM50A (339 aa).

The interval 1–31 (MAQYKGAASEAGRAMHLMKKREKQREQMEQM) is disordered. Ala-2 is modified (N-acetylalanine). Lys-100 participates in a covalent cross-link: Glycyl lysine isopeptide (Lys-Gly) (interchain with G-Cter in SUMO2). The disordered stretch occupies residues 150–177 (TTKKKKLGKNPDVDTSFLPDRDREEEEN). Residues 152-155 (KKKK) carry the Nuclear localization signal motif. The segment covering 168–177 (PDRDREEEEN) has biased composition (basic and acidic residues).

It belongs to the FAM50 family. Interacts with EFTUD2, a component of the spliceosome U5 complex. Interacts with DDX41, a component of the spliceosome C complex. In terms of tissue distribution, widely expressed in embryonic and adult tissues.

It is found in the nucleus. Probably involved in the regulation of pre-mRNA splicing. This chain is Protein FAM50A (Fam50a), found in Mus musculus (Mouse).